A 130-amino-acid chain; its full sequence is Small ribosomal subunit protein uS11 (130 aa).

Belongs to the universal ribosomal protein uS11 family. Part of the 30S ribosomal subunit. Interacts with proteins S7 and S18. Binds to IF-3.

Located on the platform of the 30S subunit, it bridges several disparate RNA helices of the 16S rRNA. Forms part of the Shine-Dalgarno cleft in the 70S ribosome. The sequence is that of Small ribosomal subunit protein uS11 from Acholeplasma laidlawii (strain PG-8A).